A 408-amino-acid chain; its full sequence is F-box A protein 155 (408 aa).

Residues 1-22 (MSDRGSDQSSSSSDSAQHIPPK) form a disordered region.

The protein belongs to the FTH family.

The protein is F-box A protein 155 (fbxa-155) of Caenorhabditis elegans.